A 256-amino-acid polypeptide reads, in one-letter code: Thiazole synthase (256 aa).

Residue Lys-96 is the Schiff-base intermediate with DXP of the active site. Residues Gly-157, Ala-183–Gly-184, and Asn-205–Thr-206 contribute to the 1-deoxy-D-xylulose 5-phosphate site.

Belongs to the ThiG family. In terms of assembly, homotetramer. Forms heterodimers with either ThiH or ThiS.

It is found in the cytoplasm. The enzyme catalyses [ThiS sulfur-carrier protein]-C-terminal-Gly-aminoethanethioate + 2-iminoacetate + 1-deoxy-D-xylulose 5-phosphate = [ThiS sulfur-carrier protein]-C-terminal Gly-Gly + 2-[(2R,5Z)-2-carboxy-4-methylthiazol-5(2H)-ylidene]ethyl phosphate + 2 H2O + H(+). It functions in the pathway cofactor biosynthesis; thiamine diphosphate biosynthesis. In terms of biological role, catalyzes the rearrangement of 1-deoxy-D-xylulose 5-phosphate (DXP) to produce the thiazole phosphate moiety of thiamine. Sulfur is provided by the thiocarboxylate moiety of the carrier protein ThiS. In vitro, sulfur can be provided by H(2)S. The chain is Thiazole synthase from Bacillus mycoides (strain KBAB4) (Bacillus weihenstephanensis).